Consider the following 552-residue polypeptide: Hyaluronan synthase 2 (552 aa).

At methionine 1–arginine 11 the chain is on the cytoplasmic side. Residues isoleucine 12–valine 32 traverse the membrane as a helical segment. Residues glycine 33–serine 45 are Extracellular-facing. Residues phenylalanine 46–leucine 66 traverse the membrane as a helical segment. The Cytoplasmic portion of the chain corresponds to glutamate 67–leucine 374. A Phosphothreonine modification is found at threonine 110. Lysine 190 is covalently cross-linked (Glycyl lysine isopeptide (Lys-Gly) (interchain with G-Cter in ubiquitin)). A glycan (O-linked (GlcNAc) serine) is linked at serine 221. Residue threonine 328 is modified to Phosphothreonine. Residues tryptophan 375 to isoleucine 395 traverse the membrane as a helical segment. The Extracellular segment spans residues glutamine 396 to lysine 402. The helical transmembrane segment at isoleucine 403–phenylalanine 423 threads the bilayer. Over alanine 424 to glycine 429 the chain is Cytoplasmic. Residues asparagine 430–alanine 450 traverse the membrane as a helical segment. At lysine 451 to phenylalanine 475 the chain is on the extracellular side. A helical membrane pass occupies residues isoleucine 476–isoleucine 496. Over tyrosine 497–threonine 510 the chain is Cytoplasmic. A helical membrane pass occupies residues valine 511 to valine 531. Residues valine 532–valine 552 lie on the Extracellular side of the membrane.

Belongs to the NodC/HAS family. In terms of assembly, homodimer; dimerization promotes enzymatic activity. Forms heterodimer with HAS3. Forms heterodimer with HAS1. Requires Mg(2+) as cofactor. Phosphorylation at Thr-328 is essential for hyaluronan synthase activity. Post-translationally, O-GlcNAcylation at Ser-221 increases the stability of HAS2 and plasma membrane localization. In terms of processing, ubiquitination at Lys-190; this ubiquitination is essential for hyaluronan synthase activity and homo- or hetero-oligomerization. Can also be poly-ubiquitinated. Deubiquitinated by USP17L22/USP17 and USP4. USP17L22/USP17 efficiently removes 'Lys-63'- and 'Lys-48'-linked polyubiquitin chains, whereas USP4 preferentially removes monoubiquitination and, partially, both 'Lys-63'- and 'Lys-48'-linked polyubiquitin chain. As to expression, overexpressed in skin fibroblasts.

The protein resides in the cell membrane. Its subcellular location is the endoplasmic reticulum membrane. The protein localises to the vesicle. It is found in the golgi apparatus membrane. It localises to the lysosome. The enzyme catalyses [hyaluronan](n) + UDP-N-acetyl-alpha-D-glucosamine = N-acetyl-beta-D-glucosaminyl-(1-&gt;4)-[hyaluronan](n) + UDP + H(+). It carries out the reaction N-acetyl-beta-D-glucosaminyl-(1-&gt;4)-[hyaluronan](n) + UDP-alpha-D-glucuronate = [hyaluronan](n+1) + UDP + H(+). The protein operates within glycan biosynthesis; hyaluronan biosynthesis. Catalyzes the addition of GlcNAc or GlcUA monosaccharides to the nascent hyaluronan polymer. Therefore, it is essential to hyaluronan synthesis a major component of most extracellular matrices that has a structural role in tissues architectures and regulates cell adhesion, migration and differentiation. This is one of three isoenzymes responsible for cellular hyaluronan synthesis and it is particularly responsible for the synthesis of high molecular mass hyaluronan. This chain is Hyaluronan synthase 2 (Has2), found in Heterocephalus glaber (Naked mole rat).